An 829-amino-acid chain; its full sequence is Cap-specific mRNA (nucleoside-2'-O-)-methyltransferase 1 (829 aa).

The segment at 1-68 (MKRAAQASDE…DSQNSQGSMA (68 aa)) is disordered. The Bipartite nuclear localization signal signature appears at 2-16 (KRAAQASDEPLKKRK). The span at 31–44 (QRTTSQDSSQSESL) shows a compositional bias: low complexity. The span at 55 to 68 (SRPSDSQNSQGSMA) shows a compositional bias: polar residues. The G-patch domain maps to 79 to 125 (YNNVSQKLMAKMGFREGEGLGKYGQGRKEIVEASTQRGRRGLGLMLK). Residues 195–199 (KTVFD) and R210 each bind substrate. Residues 223 to 442 (FFLNRAAMKM…ERYVVCKGLK (220 aa)) enclose the RrmJ-type SAM-dependent 2'-O-MTase domain. Position 226 (N226) interacts with S-adenosyl-L-methionine. K231 is an active-site residue. Residues 269–275 (CAGPGGF) and 327–328 (DI) contribute to the S-adenosyl-L-methionine site. The active site involves D356. 366 to 368 (NLQ) serves as a coordination point for substrate. K396 functions as the Proton acceptor in the catalytic mechanism. Position 431 (N431) interacts with substrate. The WW domain occupies 745–779 (KTVNDPWTMAFSKSSKRKFFYNKQTKESTYDLPAT).

The protein localises to the nucleus. It carries out the reaction a 5'-end (N(7)-methyl 5'-triphosphoguanosine)-ribonucleoside in mRNA + S-adenosyl-L-methionine = a 5'-end (N(7)-methyl 5'-triphosphoguanosine)-(2'-O-methyl-ribonucleoside) in mRNA + S-adenosyl-L-homocysteine + H(+). Its function is as follows. S-adenosyl-L-methionine-dependent methyltransferase that mediates mRNA cap1 2'-O-ribose methylation to the 5'-cap structure of mRNAs. Methylates the ribose of the first nucleotide of a m(7)GpppG-capped mRNA and small nuclear RNA (snRNA) to produce m(7)GpppRm (cap1). Displays a preference for cap0 transcripts. Cap1 modification is linked to higher levels of translation. May be involved in the interferon response pathway. This Danio rerio (Zebrafish) protein is Cap-specific mRNA (nucleoside-2'-O-)-methyltransferase 1 (cmtr1).